The primary structure comprises 176 residues: Cytochrome b (176 aa).

3 consecutive transmembrane segments (helical) span residues 33-53, 77-98, and 113-133; these read FGSL…FLAM, WLLR…YLHV, and WNVG…GYVL. The heme b site is built by His-83 and His-97.

The protein belongs to the cytochrome b family. As to quaternary structure, the cytochrome bc1 complex contains 11 subunits: 3 respiratory subunits (MT-CYB, CYC1 and UQCRFS1), 2 core proteins (UQCRC1 and UQCRC2) and 6 low-molecular weight proteins (UQCRH/QCR6, UQCRB/QCR7, UQCRQ/QCR8, UQCR10/QCR9, UQCR11/QCR10 and a cleavage product of UQCRFS1). This cytochrome bc1 complex then forms a dimer. It depends on heme b as a cofactor.

The protein localises to the mitochondrion inner membrane. Functionally, component of the ubiquinol-cytochrome c reductase complex (complex III or cytochrome b-c1 complex) that is part of the mitochondrial respiratory chain. The b-c1 complex mediates electron transfer from ubiquinol to cytochrome c. Contributes to the generation of a proton gradient across the mitochondrial membrane that is then used for ATP synthesis. This Mormopterus kalinowskii (Kalinowski's mastiff bat) protein is Cytochrome b (MT-CYB).